The sequence spans 415 residues: Squalene synthase 11 (415 aa).

Helical transmembrane passes span 281–301 and 392–412; these read AIFR…ALCF and LIII…SNLP.

The protein belongs to the phytoene/squalene synthase family. Requires Mg(2+) as cofactor. Mn(2+) is required as a cofactor.

It localises to the endoplasmic reticulum membrane. The enzyme catalyses 2 (2E,6E)-farnesyl diphosphate + NADH + H(+) = squalene + 2 diphosphate + NAD(+). The catalysed reaction is 2 (2E,6E)-farnesyl diphosphate + NADPH + H(+) = squalene + 2 diphosphate + NADP(+). It functions in the pathway terpene metabolism; lanosterol biosynthesis; lanosterol from farnesyl diphosphate: step 1/3. Its function is as follows. Component of the triterpene saponins (e.g. ginsenosides or panaxosides) and phytosterols biosynthetic pathways. Catalyzes the biosynthesis of squalene. The polypeptide is Squalene synthase 11 (Panax ginseng (Korean ginseng)).